Here is a 341-residue protein sequence, read N- to C-terminus: Ribose-phosphate pyrophosphokinase 5 (341 aa).

3 residues coordinate Mg(2+): Asp152, His154, and Asp167.

This sequence belongs to the ribose-phosphate pyrophosphokinase family.

Its subcellular location is the cytoplasm. It catalyses the reaction D-ribose 5-phosphate + ATP = 5-phospho-alpha-D-ribose 1-diphosphate + AMP + H(+). The protein operates within metabolic intermediate biosynthesis; 5-phospho-alpha-D-ribose 1-diphosphate biosynthesis; 5-phospho-alpha-D-ribose 1-diphosphate from D-ribose 5-phosphate (route I): step 1/1. Its function is as follows. 5-phosphoribose 1-diphosphate synthase involved in nucleotide, histidine, and tryptophan biosynthesis. Active in heteromultimeric complexes with other 5-phosphoribose 1-diphosphate synthases. The chain is Ribose-phosphate pyrophosphokinase 5 from Schizosaccharomyces pombe (strain 972 / ATCC 24843) (Fission yeast).